The primary structure comprises 236 residues: 1-(5-phosphoribosyl)-5-[(5-phosphoribosylamino)methylideneamino] imidazole-4-carboxamide isomerase (236 aa).

Residue aspartate 8 is the Proton acceptor of the active site. Residue aspartate 127 is the Proton donor of the active site.

Belongs to the HisA/HisF family.

The protein resides in the cytoplasm. It catalyses the reaction 1-(5-phospho-beta-D-ribosyl)-5-[(5-phospho-beta-D-ribosylamino)methylideneamino]imidazole-4-carboxamide = 5-[(5-phospho-1-deoxy-D-ribulos-1-ylimino)methylamino]-1-(5-phospho-beta-D-ribosyl)imidazole-4-carboxamide. It functions in the pathway amino-acid biosynthesis; L-histidine biosynthesis; L-histidine from 5-phospho-alpha-D-ribose 1-diphosphate: step 4/9. In Sulfurimonas denitrificans (strain ATCC 33889 / DSM 1251) (Thiomicrospira denitrificans (strain ATCC 33889 / DSM 1251)), this protein is 1-(5-phosphoribosyl)-5-[(5-phosphoribosylamino)methylideneamino] imidazole-4-carboxamide isomerase.